Consider the following 238-residue polypeptide: Probable transcriptional regulatory protein CT_457 (238 aa).

A disordered region spans residues 1–21 (MAGHSKWANTKHRKERADHKK). Basic residues predominate over residues 9–21 (NTKHRKERADHKK).

Belongs to the TACO1 family.

It localises to the cytoplasm. The chain is Probable transcriptional regulatory protein CT_457 from Chlamydia trachomatis serovar D (strain ATCC VR-885 / DSM 19411 / UW-3/Cx).